A 261-amino-acid chain; its full sequence is Imidazole glycerol phosphate synthase subunit HisF (261 aa).

Catalysis depends on residues Asp12 and Asp131.

This sequence belongs to the HisA/HisF family. In terms of assembly, heterodimer of HisH and HisF.

It is found in the cytoplasm. It catalyses the reaction 5-[(5-phospho-1-deoxy-D-ribulos-1-ylimino)methylamino]-1-(5-phospho-beta-D-ribosyl)imidazole-4-carboxamide + L-glutamine = D-erythro-1-(imidazol-4-yl)glycerol 3-phosphate + 5-amino-1-(5-phospho-beta-D-ribosyl)imidazole-4-carboxamide + L-glutamate + H(+). The protein operates within amino-acid biosynthesis; L-histidine biosynthesis; L-histidine from 5-phospho-alpha-D-ribose 1-diphosphate: step 5/9. Its function is as follows. IGPS catalyzes the conversion of PRFAR and glutamine to IGP, AICAR and glutamate. The HisF subunit catalyzes the cyclization activity that produces IGP and AICAR from PRFAR using the ammonia provided by the HisH subunit. The polypeptide is Imidazole glycerol phosphate synthase subunit HisF (Brucella anthropi (strain ATCC 49188 / DSM 6882 / CCUG 24695 / JCM 21032 / LMG 3331 / NBRC 15819 / NCTC 12168 / Alc 37) (Ochrobactrum anthropi)).